The sequence spans 172 residues: Endoribonuclease YbeY (172 aa).

The tract at residues 1–21 (MTLHVGAEPAPREDDTEDALR) is disordered. Basic and acidic residues predominate over residues 10-21 (APREDDTEDALR). Zn(2+) is bound by residues His-134, His-138, and His-144.

The protein belongs to the endoribonuclease YbeY family. Zn(2+) serves as cofactor.

Its subcellular location is the cytoplasm. Functionally, single strand-specific metallo-endoribonuclease involved in late-stage 70S ribosome quality control and in maturation of the 3' terminus of the 16S rRNA. This Burkholderia lata (strain ATCC 17760 / DSM 23089 / LMG 22485 / NCIMB 9086 / R18194 / 383) protein is Endoribonuclease YbeY.